The primary structure comprises 119 residues: Large ribosomal subunit protein uL18 (119 aa).

This sequence belongs to the universal ribosomal protein uL18 family. In terms of assembly, part of the 50S ribosomal subunit; part of the 5S rRNA/L5/L18/L25 subcomplex. Contacts the 5S and 23S rRNAs.

In terms of biological role, this is one of the proteins that bind and probably mediate the attachment of the 5S RNA into the large ribosomal subunit, where it forms part of the central protuberance. This is Large ribosomal subunit protein uL18 from Clostridium botulinum (strain Loch Maree / Type A3).